A 143-amino-acid chain; its full sequence is Transcriptional regulator MraZ (143 aa).

SpoVT-AbrB domains lie at 5–47 (EFQH…TLTE) and 76–119 (AVEV…DRKL).

It belongs to the MraZ family. As to quaternary structure, forms oligomers.

The protein localises to the cytoplasm. Its subcellular location is the nucleoid. In Macrococcus caseolyticus (strain JCSC5402) (Macrococcoides caseolyticum), this protein is Transcriptional regulator MraZ.